A 273-amino-acid polypeptide reads, in one-letter code: Small ribosomal subunit protein eS1 (273 aa).

It belongs to the eukaryotic ribosomal protein eS1 family. As to quaternary structure, component of the small ribosomal subunit. Mature ribosomes consist of a small (40S) and a large (60S) subunit. The 40S subunit contains about 33 different proteins and 1 molecule of RNA (18S). The 60S subunit contains about 49 different proteins and 3 molecules of RNA (25S, 5.8S and 5S).

It is found in the cytoplasm. The polypeptide is Small ribosomal subunit protein eS1 (rps3a) (Dictyostelium discoideum (Social amoeba)).